Here is a 319-residue protein sequence, read N- to C-terminus: Cytochrome c biogenesis protein CcsA (319 aa).

Transmembrane regions (helical) follow at residues 14 to 34 (AFAV…FPQW), 46 to 66 (AIAN…GGYF), 74 to 94 (SLFF…SISG), 97 to 117 (LVGV…ALSL), and 142 to 162 (VMML…ALLV). The interval 175–201 (SVGTGSFRSRRPEPSLEASTGNGGTTV) is disordered. A compositionally biased stretch (polar residues) spans 191–201 (EASTGNGGTTV). The next 3 membrane-spanning stretches (helical) occupy residues 227-247 (MIGL…VWAN), 254-274 (WSWD…AAYL), and 288-308 (AILA…VNLL).

Belongs to the CcmF/CycK/Ccl1/NrfE/CcsA family. In terms of assembly, may interact with ccs1.

The protein localises to the cellular thylakoid membrane. In terms of biological role, required during biogenesis of c-type cytochromes (cytochrome c6 and cytochrome f) at the step of heme attachment. The chain is Cytochrome c biogenesis protein CcsA from Thermosynechococcus vestitus (strain NIES-2133 / IAM M-273 / BP-1).